The primary structure comprises 301 residues: GTPase Era (301 aa).

Residues lysine 4–proline 173 form the Era-type G domain. Residues glycine 12 to serine 19 form a G1 region. GTP is bound at residue glycine 12 to serine 19. The G2 stretch occupies residues asparagine 38–lysine 42. Positions aspartate 64 to glycine 67 are G3. Residues aspartate 64–leucine 68 and serine 122–aspartate 125 each bind GTP. The interval serine 122–aspartate 125 is G4. The interval leucine 152 to alanine 154 is G5. The KH type-2 domain maps to leucine 204–lysine 280.

Belongs to the TRAFAC class TrmE-Era-EngA-EngB-Septin-like GTPase superfamily. Era GTPase family. As to quaternary structure, monomer.

It is found in the cytoplasm. The protein localises to the cell inner membrane. Functionally, an essential GTPase that binds both GDP and GTP, with rapid nucleotide exchange. Plays a role in 16S rRNA processing and 30S ribosomal subunit biogenesis and possibly also in cell cycle regulation and energy metabolism. The protein is GTPase Era of Helicobacter pylori (strain HPAG1).